The sequence spans 100 residues: Large ribosomal subunit protein bL21 (100 aa).

Belongs to the bacterial ribosomal protein bL21 family. In terms of assembly, part of the 50S ribosomal subunit. Contacts protein L20.

Functionally, this protein binds to 23S rRNA in the presence of protein L20. This Corynebacterium urealyticum (strain ATCC 43042 / DSM 7109) protein is Large ribosomal subunit protein bL21.